The following is a 392-amino-acid chain: Protein O-glucosyltransferase 1 (392 aa).

The N-terminal stretch at 1–23 is a signal peptide; sequence MERLSGCRLRPWMLLLLLFPVQG. Disulfide bonds link Cys49–Cys56, Cys54–Cys357, Cys102–Cys108, and Cys263–Cys286. Asn53 is a glycosylation site (N-linked (GlcNAc...) asparagine). The segment at 103 to 107 is interaction with the consensus sequence C-X-S-X-[PA]-C in peptide substrates; sequence MFPSR. Catalysis depends on Asp133, which acts as the Proton donor/acceptor. The tract at residues 172-178 is interaction with the consensus sequence C-X-S-X-[PA]-C in peptide substrates; that stretch reads AVWPLYP. A UDP-alpha-D-glucose-binding site is contributed by Tyr177. Asn204 is a glycosylation site (N-linked (GlcNAc...) asparagine). Residues Ser212, Arg218, and 274 to 279 contribute to the UDP-alpha-D-glucose site; that span reads VAASFR. Asn373 is a glycosylation site (N-linked (GlcNAc...) asparagine). Positions 389–392 match the Prevents secretion from ER motif; that stretch reads KTEL.

It belongs to the glycosyltransferase 90 family.

Its subcellular location is the endoplasmic reticulum lumen. It carries out the reaction L-seryl-[EGF-like domain protein] + UDP-alpha-D-xylose = 3-O-(beta-D-xylosyl)-L-seryl-[EGF-like domain protein] + UDP + H(+). The enzyme catalyses L-seryl-[EGF-like domain protein] + UDP-alpha-D-glucose = 3-O-(beta-D-glucosyl)-L-seryl-[EGF-like domain protein] + UDP + H(+). It functions in the pathway protein modification; protein glycosylation. Dual specificity glycosyltransferase that catalyzes the transfer of glucose and xylose from UDP-glucose and UDP-xylose, respectively, to a serine residue found in the consensus sequence of C-X-S-X-P-C. Specifically targets extracellular EGF repeats of protein such as CRB2, F7, F9 and NOTCH2. Acts as a positive regulator of Notch signaling by mediating O-glucosylation of Notch, leading to regulate muscle development. Notch glucosylation does not affect Notch ligand binding. Required during early development to promote gastrulation: acts by mediating O-glucosylation of CRB2, which is required for CRB2 localization to the cell membrane. This Rattus norvegicus (Rat) protein is Protein O-glucosyltransferase 1 (Poglut1).